We begin with the raw amino-acid sequence, 244 residues long: Nonsense-mediated decay protein 4 (244 aa).

It is found in the cytoplasm. Functionally, involved in nonsense-mediated decay of mRNAs containing premature stop codons. In Kluyveromyces lactis (strain ATCC 8585 / CBS 2359 / DSM 70799 / NBRC 1267 / NRRL Y-1140 / WM37) (Yeast), this protein is Nonsense-mediated decay protein 4 (NMD4).